Consider the following 64-residue polypeptide: Large ribosomal subunit protein bL28 (64 aa).

The protein belongs to the bacterial ribosomal protein bL28 family.

The sequence is that of Large ribosomal subunit protein bL28 (rpmB) from Mycobacterium leprae (strain TN).